A 343-amino-acid polypeptide reads, in one-letter code: Uroporphyrinogen decarboxylase (343 aa).

Substrate contacts are provided by residues 23 to 27, D73, Y150, S205, and H322; that span reads RQAGR.

It belongs to the uroporphyrinogen decarboxylase family. In terms of assembly, homodimer.

Its subcellular location is the cytoplasm. It catalyses the reaction uroporphyrinogen III + 4 H(+) = coproporphyrinogen III + 4 CO2. Its pathway is porphyrin-containing compound metabolism; protoporphyrin-IX biosynthesis; coproporphyrinogen-III from 5-aminolevulinate: step 4/4. In terms of biological role, catalyzes the decarboxylation of four acetate groups of uroporphyrinogen-III to yield coproporphyrinogen-III. The protein is Uroporphyrinogen decarboxylase of Cereibacter sphaeroides (strain ATCC 17025 / ATH 2.4.3) (Rhodobacter sphaeroides).